A 223-amino-acid chain; its full sequence is 7-cyano-7-deazaguanine synthase (223 aa).

Residue 10 to 20 coordinates ATP; the sequence is FSGGQDSTTCL. Zn(2+) is bound by residues C188, C197, C200, and C203.

Belongs to the QueC family. The cofactor is Zn(2+).

It catalyses the reaction 7-carboxy-7-deazaguanine + NH4(+) + ATP = 7-cyano-7-deazaguanine + ADP + phosphate + H2O + H(+). Its pathway is purine metabolism; 7-cyano-7-deazaguanine biosynthesis. Its function is as follows. Catalyzes the ATP-dependent conversion of 7-carboxy-7-deazaguanine (CDG) to 7-cyano-7-deazaguanine (preQ(0)). In Phocaeicola vulgatus (strain ATCC 8482 / DSM 1447 / JCM 5826 / CCUG 4940 / NBRC 14291 / NCTC 11154) (Bacteroides vulgatus), this protein is 7-cyano-7-deazaguanine synthase.